We begin with the raw amino-acid sequence, 238 residues long: MGLYDRDYTQDSRLPGTFSSRVYGWMTAGLAVTALTSLGLYATGAYRTLFSLWWVWCFATLGVSFYIQAQIQKLSVPAVMGLFLAYSVLEGMFFGTMVPVYAAQFGGGIVWAAFGSAAVIFGLSAAYGAFTKSDLTQIHRILMLALIGLMVISLGFLVVSLFTPMPLMYLLICYLGLIIFVGLTVVDAQSIRRVARSVGDHGDLSYKLSLIMALQMYCNVIMIFWYLLQIFASSDKRR.

7 helical membrane-spanning segments follow: residues 22–42 (VYGW…GLYA), 49–69 (LFSL…YIQA), 78–98 (AVMG…GTMV), 105–125 (FGGG…GLSA), 141–161 (ILML…VVSL), 166–186 (PLMY…LTVV), and 208–228 (LSLI…WYLL).

The protein belongs to the BI1 family.

It is found in the cell membrane. This is an uncharacterized protein from Chlamydia muridarum (strain MoPn / Nigg).